A 385-amino-acid chain; its full sequence is MTTKLYVDFGGYSAIEKGNLIIPRDNILNKEDFDSIEIGEVVDIYSKRGKFLGRGFKNPKEVRIMTLRKEDLDENYIREKIIKANEYRLKLGFKDTYRMVYTQSDWLNGLVIDKYNDIATVQIFNYGIEKMKDVVVETLLDLGIDSIYEKSSGRNRKRAGLPEVEGILAGEKTETIIQEGEAKFKVTFDGQKTGFFLDQRENRLELEKFIKEGDRVLDICCYTGGFSVHAAIRGAEVVGVDLSKKALKLAEENMELNNIPKDRYEFIEGNAFKVMEEFIEDGEKFDVVILDPPAFAQSKKALKSAIKGYHMLNRFGAKLADRLLVTCSCSQPLEPDAFKALVIDACLKAKKWAKIIKYGSQSPDHPITSKGTEYLKCLFLSVEEI.

One can recognise a PUA domain in the interval 2 to 81; that stretch reads TTKLYVDFGG…LDENYIREKI (80 aa).

The protein belongs to the methyltransferase superfamily. RlmI family.

The protein resides in the cytoplasm. The protein is Putative ribosomal RNA large subunit methyltransferase MJ1653 of Methanocaldococcus jannaschii (strain ATCC 43067 / DSM 2661 / JAL-1 / JCM 10045 / NBRC 100440) (Methanococcus jannaschii).